We begin with the raw amino-acid sequence, 565 residues long: Adenine deaminase (565 aa).

The protein belongs to the metallo-dependent hydrolases superfamily. Adenine deaminase family. Mn(2+) is required as a cofactor.

The catalysed reaction is adenine + H2O + H(+) = hypoxanthine + NH4(+). This Cereibacter sphaeroides (strain ATCC 17025 / ATH 2.4.3) (Rhodobacter sphaeroides) protein is Adenine deaminase.